The following is a 484-amino-acid chain: 6-phosphogluconate dehydrogenase, decarboxylating (484 aa).

NADP(+) is bound by residues 10–15 (GLAVMG), 33–35 (NRT), 75–77 (IKA), and Asn-103. Substrate is bound by residues Asn-103 and 129 to 131 (SGG). Lys-183 (proton acceptor) is an active-site residue. Residue 186-187 (HN) coordinates substrate. Residue Glu-190 is the Proton donor of the active site. Substrate contacts are provided by Tyr-191, Lys-260, Arg-287, Arg-448, and His-454.

The protein belongs to the 6-phosphogluconate dehydrogenase family. Homodimer.

It catalyses the reaction 6-phospho-D-gluconate + NADP(+) = D-ribulose 5-phosphate + CO2 + NADPH. The protein operates within carbohydrate degradation; pentose phosphate pathway; D-ribulose 5-phosphate from D-glucose 6-phosphate (oxidative stage): step 3/3. Its function is as follows. Catalyzes the oxidative decarboxylation of 6-phosphogluconate to ribulose 5-phosphate and CO(2), with concomitant reduction of NADP to NADPH. The chain is 6-phosphogluconate dehydrogenase, decarboxylating from Caenorhabditis elegans.